A 101-amino-acid polypeptide reads, in one-letter code: uncharacterized protein (101 aa).

The interval 76–101 (KGNVTRRRKKTHLGNDDGKKEAQEKM) is disordered. The segment covering 88–101 (LGNDDGKKEAQEKM) has biased composition (basic and acidic residues).

This is an uncharacterized protein from Homo sapiens (Human).